The sequence spans 287 residues: Pyridoxal 5'-phosphate synthase subunit PdxS (287 aa).

A D-ribose 5-phosphate-binding site is contributed by D21. Catalysis depends on K78, which acts as the Schiff-base intermediate with D-ribose 5-phosphate. G150 serves as a coordination point for D-ribose 5-phosphate. Residue R162 participates in D-glyceraldehyde 3-phosphate binding. D-ribose 5-phosphate is bound by residues G211 and G232–S233.

This sequence belongs to the PdxS/SNZ family. In terms of assembly, in the presence of PdxT, forms a dodecamer of heterodimers.

The enzyme catalyses aldehydo-D-ribose 5-phosphate + D-glyceraldehyde 3-phosphate + L-glutamine = pyridoxal 5'-phosphate + L-glutamate + phosphate + 3 H2O + H(+). It functions in the pathway cofactor biosynthesis; pyridoxal 5'-phosphate biosynthesis. Catalyzes the formation of pyridoxal 5'-phosphate from ribose 5-phosphate (RBP), glyceraldehyde 3-phosphate (G3P) and ammonia. The ammonia is provided by the PdxT subunit. Can also use ribulose 5-phosphate and dihydroxyacetone phosphate as substrates, resulting from enzyme-catalyzed isomerization of RBP and G3P, respectively. The chain is Pyridoxal 5'-phosphate synthase subunit PdxS from Tropheryma whipplei (strain TW08/27) (Whipple's bacillus).